We begin with the raw amino-acid sequence, 421 residues long: Acetate kinase (421 aa).

Asn7 provides a ligand contact to Mg(2+). Lys14 provides a ligand contact to ATP. Arg91 is a substrate binding site. The active-site Proton donor/acceptor is Asp148. ATP is bound by residues 208 to 212 (HIGNG) and 283 to 285 (DRR). Glu387 is a Mg(2+) binding site.

It belongs to the acetokinase family. As to quaternary structure, homodimer. Mg(2+) is required as a cofactor. It depends on Mn(2+) as a cofactor.

The protein localises to the cytoplasm. The catalysed reaction is acetate + ATP = acetyl phosphate + ADP. It functions in the pathway metabolic intermediate biosynthesis; acetyl-CoA biosynthesis; acetyl-CoA from acetate: step 1/2. Catalyzes the formation of acetyl phosphate from acetate and ATP. Can also catalyze the reverse reaction. The polypeptide is Acetate kinase (Geobacter sulfurreducens (strain ATCC 51573 / DSM 12127 / PCA)).